Reading from the N-terminus, the 409-residue chain is Arginine deiminase (409 aa).

The Amidino-cysteine intermediate role is filled by cysteine 399.

It belongs to the arginine deiminase family.

Its subcellular location is the cytoplasm. It carries out the reaction L-arginine + H2O = L-citrulline + NH4(+). Its pathway is amino-acid degradation; L-arginine degradation via ADI pathway; carbamoyl phosphate from L-arginine: step 1/2. The protein is Arginine deiminase of Streptococcus pneumoniae (strain P1031).